Consider the following 651-residue polypeptide: Transcription factor E2-alpha (651 aa).

Disordered regions lie at residues 32–107 (ANGK…SERN), 131–208 (LSLS…KTPS), and 341–378 (DHSS…ALSP). Composition is skewed to low complexity over residues 56–73 (SSGS…FDPS), 131–148 (LSLS…KSSS), and 341–354 (DHSS…PSTP). Ser135 and Ser140 each carry phosphoserine. At Thr353 the chain carries Phosphothreonine. The residue at position 357 (Ser357) is a Phosphoserine. Arg369 is modified (omega-N-methylarginine). The residue at position 377 (Ser377) is a Phosphoserine. The interval 387–422 (LSKMEDRLDEAIHVLRSHAVGTASDLHGLLPGHGAL) is leucine-zipper. The segment at 457–549 (HNHASLPSQP…KAEREKERRV (93 aa)) is disordered. Positions 461-479 (SLPSQPSSLPDLSQRPPDS) are enriched in low complexity. Lys496 participates in a covalent cross-link: Glycyl lysine isopeptide (Lys-Gly) (interchain with G-Cter in SUMO2). A Phosphoserine modification is found at Ser526. Asp528 is subject to Phosphothreonine. Asp533 is modified (phosphoserine). Over residues 539–549 (QKAEREKERRV) the composition is skewed to basic and acidic residues. Residues 546–599 (ERRVANNARERLRVRDINEAFKELGRMCQLHLSSEKPQTKLLILHQAVAVILSL) form the bHLH domain. Lys622 participates in a covalent cross-link: Glycyl lysine isopeptide (Lys-Gly) (interchain with G-Cter in SUMO2).

Homodimer. Heterodimer; efficient DNA binding requires dimerization with another bHLH protein. Forms a heterodimer with TWIST1 and TWIST2. Forms a heterodimer with NEUROD1; the heterodimer is inhibited in presence of ID2, but not NR0B2, to E-box element. Forms a heterodimer with TCF15; the heterodimer binds E-box element. Forms a heterodimer with MYOG; heterodimerization enhances MYOG DNA-binding and transcriptional activities. Forms a heterodimer with ATOH8; repress transcription of TCF3 and TCF3-NEUROG3 dimer-induced transactivation of E box-dependent promoters. Component of a nuclear TAL-1 complex composed at least of CBFA2T3, LDB1, TAL1 and TCF3. Interacts with NEUROD2. Interacts with EP300. Interacts with PTF1A, TGFB1I1 and UBE2I. Interacts with BHLHA9. Interacts with ASB2; the interaction is mediated by SKP2 and targets TCF3 for Notch-induced proteasomal degradation. Interacts with transcription factor ASCL5/AmeloD. In terms of assembly, forms a heterodimer with ATOH7; required for ATOH7 DNA-binding. As to quaternary structure, interacts with RALGAPA1. Interacts with FIGLA. Post-translationally, phosphorylated following NGF stimulation. In terms of processing, undergoes Notch-induced ubiquitination and subsequent proteasomal degradation which is mediated by ASB1 or ASB2, the substrate-recognition components of probable ECS E3 ubiquitin-protein ligase complexes.

It localises to the nucleus. In terms of biological role, transcriptional regulator involved in the initiation of neuronal differentiation and mesenchymal to epithelial transition. Heterodimers between TCF3 and tissue-specific basic helix-loop-helix (bHLH) proteins play major roles in determining tissue-specific cell fate during embryogenesis, like muscle or early B-cell differentiation. Together with TCF15, required for the mesenchymal to epithelial transition. Dimers bind DNA on E-box motifs: 5'-CANNTG-3'. Binds to the kappa-E2 site in the kappa immunoglobulin gene enhancer. Binds to IEB1 and IEB2, which are short DNA sequences in the insulin gene transcription control region. Functionally, facilitates ATOH7 binding to DNA at the consensus sequence 5'-CAGGTG-3', and positively regulates transcriptional activity. In Mus musculus (Mouse), this protein is Transcription factor E2-alpha (Tcf3).